The primary structure comprises 485 residues: Serine hydroxymethyltransferase, mitochondrial (485 aa).

K259 carries the post-translational modification N6-(pyridoxal phosphate)lysine.

Belongs to the SHMT family. Homotetramer. It depends on pyridoxal 5'-phosphate as a cofactor.

The protein resides in the mitochondrion. It catalyses the reaction (6R)-5,10-methylene-5,6,7,8-tetrahydrofolate + glycine + H2O = (6S)-5,6,7,8-tetrahydrofolate + L-serine. It participates in one-carbon metabolism; tetrahydrofolate interconversion. In terms of biological role, interconversion of serine and glycine. In Candida glabrata (strain ATCC 2001 / BCRC 20586 / JCM 3761 / NBRC 0622 / NRRL Y-65 / CBS 138) (Yeast), this protein is Serine hydroxymethyltransferase, mitochondrial (SHM1).